The following is a 564-amino-acid chain: Probable diguanylate cyclase DgcQ (564 aa).

A run of 2 helical transmembrane segments spans residues 20–40 and 360–380; these read LGPG…STLL and IALT…WYVI. Residues 428–563 form the GGDEF domain; it reads HPFSVIQVDL…GRNRVFASDN (136 aa). D436 lines the Mg(2+) pocket. Substrate contacts are provided by N444, H449, and D453. E479 contacts Mg(2+). E479 serves as the catalytic Proton acceptor.

Homodimer. The cofactor is Mg(2+).

It is found in the cell inner membrane. The enzyme catalyses 2 GTP = 3',3'-c-di-GMP + 2 diphosphate. The protein operates within glycan metabolism; bacterial cellulose biosynthesis. Its pathway is purine metabolism; 3',5'-cyclic di-GMP biosynthesis. Catalyzes the synthesis of cyclic-di-GMP (c-di-GMP) via the condensation of 2 GTP molecules. Cyclic-di-GMP is a second messenger which controls cell surface-associated traits in bacteria. Involved in the regulation of cellulose production. This is Probable diguanylate cyclase DgcQ from Escherichia coli O157:H7.